We begin with the raw amino-acid sequence, 404 residues long: Argininosuccinate synthase (404 aa).

ATP is bound by residues 9-17 (AYSGGLDTS) and Ala36. Residue Tyr87 coordinates L-citrulline. Gly117 serves as a coordination point for ATP. The L-aspartate site is built by Thr119, Asn123, and Asp124. Residue Asn123 participates in L-citrulline binding. 3 residues coordinate L-citrulline: Arg127, Ser176, and Glu261.

It belongs to the argininosuccinate synthase family. Type 1 subfamily. As to quaternary structure, homotetramer.

The protein resides in the cytoplasm. It catalyses the reaction L-citrulline + L-aspartate + ATP = 2-(N(omega)-L-arginino)succinate + AMP + diphosphate + H(+). It participates in amino-acid biosynthesis; L-arginine biosynthesis; L-arginine from L-ornithine and carbamoyl phosphate: step 2/3. The chain is Argininosuccinate synthase from Burkholderia pseudomallei (strain K96243).